We begin with the raw amino-acid sequence, 282 residues long: Transcription factor BC1 (282 aa).

The interval 34-123 is disordered; the sequence is TTAPAIPEDA…ATDSHSLAER (90 aa). A compositionally biased stretch (polar residues) spans 45-55; it reads METSSVVLDTS. The segment covering 75–84 has biased composition (basic and acidic residues); it reads HSKEAKENGR. The Nuclear localization signal motif lies at 109–116; it reads ARRGQATD. Residues 113 to 126 form a basic motif; degenerate region; sequence QATDSHSLAERVRR. The 51-residue stretch at 113–163 folds into the bHLH domain; the sequence is QATDSHSLAERVRRERISERMRMLQALVPGCDKVTGKALILDEIINYVQSL. The segment at 127–163 is helix-loop-helix motif; it reads ERISERMRMLQALVPGCDKVTGKALILDEIINYVQSL. The segment at 219-251 is disordered; it reads PAQSHAIMDTSNTSPTPYTLQVQGGSNNNSLSQ.

The protein belongs to the bHLH protein family. As to quaternary structure, homodimer. Component of a nuclear cell elongation controlling complex made of ILI5/BUL1, LO9-177 and BC1. Interacts with ILI5/BUL1 only in the presence of LO9-177. Interacts with IBH1. Binds to LO9-177 in the nucleus. Interacts with BCL1. As to expression, preferentially present in anthers and leaves lamina joints. Expressed in seedlings, leaves sheaths, collars and panicles.

The protein localises to the nucleus. In terms of biological role, transcription activator that contributes, together with LO9-177 and ILI5/BUL1, to the promotion of leaf inclination and grain size by modulating cell elongation. Involved in the RLI1-dependent modulation of leaf inclination by promoting lamina joint cell elongation, especially in response to phosphate (Pi) availability. This is Transcription factor BC1 from Oryza sativa subsp. japonica (Rice).